The following is a 430-amino-acid chain: uncharacterized protein (430 aa).

Helical transmembrane passes span 20-40 (YLCL…GIMP) and 405-425 (YIWW…LLVI).

Its subcellular location is the membrane. This is an uncharacterized protein from Schizosaccharomyces pombe (strain 972 / ATCC 24843) (Fission yeast).